We begin with the raw amino-acid sequence, 510 residues long: Maturase K (510 aa).

Belongs to the intron maturase 2 family. MatK subfamily.

Its subcellular location is the plastid. Its function is as follows. Usually encoded in the trnK tRNA gene intron. Probably assists in splicing its own and other chloroplast group II introns. The sequence is that of Maturase K from Bartsia alpina (Velvet bells).